A 469-amino-acid chain; its full sequence is Argininosuccinate lyase (469 aa).

This sequence belongs to the lyase 1 family. Argininosuccinate lyase subfamily.

It is found in the cytoplasm. The catalysed reaction is 2-(N(omega)-L-arginino)succinate = fumarate + L-arginine. It functions in the pathway amino-acid biosynthesis; L-arginine biosynthesis; L-arginine from L-ornithine and carbamoyl phosphate: step 3/3. The protein is Argininosuccinate lyase of Burkholderia orbicola (strain MC0-3).